The following is a 68-amino-acid chain: DNA-directed RNA polymerase subunit omega (68 aa).

The protein belongs to the RNA polymerase subunit omega family. In terms of assembly, the RNAP catalytic core consists of 2 alpha, 1 beta, 1 beta' and 1 omega subunit. When a sigma factor is associated with the core the holoenzyme is formed, which can initiate transcription.

It carries out the reaction RNA(n) + a ribonucleoside 5'-triphosphate = RNA(n+1) + diphosphate. Promotes RNA polymerase assembly. Latches the N- and C-terminal regions of the beta' subunit thereby facilitating its interaction with the beta and alpha subunits. The protein is DNA-directed RNA polymerase subunit omega of Alkaliphilus metalliredigens (strain QYMF).